A 928-amino-acid chain; its full sequence is Dual serine/threonine and tyrosine protein kinase (928 aa).

Residues 1–14 (MEGDGVPWGSEPES) are compositionally biased toward low complexity. Disordered stretches follow at residues 1-22 (MEGDGVPWGSEPESGPGPGGGG) and 55-81 (LRGSQPRGCPSSPAEGGEAGRGPAGDV). Residues 394 to 430 (RKKENELYESLMNIANRKQEEMKDMIVETLNTMKEEL) are a coiled coil. One can recognise a Protein kinase domain in the interval 651–905 (PKLGQELGRG…PLLGIVQPML (255 aa)). Residues 657–665 (LGRGQYGVV) and Lys-680 each bind ATP. The active-site Proton acceptor is the Asp-776.

Belongs to the protein kinase superfamily. Ser/Thr protein kinase family.

The protein resides in the cytoplasm. It is found in the cell membrane. The protein localises to the apical cell membrane. It localises to the basolateral cell membrane. Its subcellular location is the cell junction. It carries out the reaction L-seryl-[protein] + ATP = O-phospho-L-seryl-[protein] + ADP + H(+). The enzyme catalyses L-threonyl-[protein] + ATP = O-phospho-L-threonyl-[protein] + ADP + H(+). It catalyses the reaction L-tyrosyl-[protein] + ATP = O-phospho-L-tyrosyl-[protein] + ADP + H(+). In terms of biological role, acts as a positive regulator of ERK phosphorylation downstream of fibroblast growth factor-receptor activation. Involved in the regulation of both caspase-dependent apoptosis and caspase-independent cell death. In the skin, it plays a predominant role in suppressing caspase-dependent apoptosis in response to UV stress in a range of dermal cell types. The protein is Dual serine/threonine and tyrosine protein kinase (DSTYK) of Bos taurus (Bovine).